Reading from the N-terminus, the 261-residue chain is Uridine-cytidine kinase 2 (261 aa).

Positions Met1–Asn16 are enriched in polar residues. A disordered region spans residues Met1–Gly24. An N-acetylalanine modification is found at Ala2. Gly27 to Ser35 contributes to the ATP binding site. Substrate is bound by residues Asp84, Tyr112, His117, Arg166, Arg176, and Gln184. ATP is bound at residue Asp213. The disordered stretch occupies residues Arg236–His261. Phosphoserine is present on Ser254.

The protein belongs to the uridine kinase family. As to quaternary structure, homotetramer. According to PubMed:8812458; testis-specific. According to PubMed:11306702, placenta-specific.

It catalyses the reaction uridine + ATP = UMP + ADP + H(+). The enzyme catalyses cytidine + ATP = CMP + ADP + H(+). The protein operates within pyrimidine metabolism; CTP biosynthesis via salvage pathway; CTP from cytidine: step 1/3. It functions in the pathway pyrimidine metabolism; UMP biosynthesis via salvage pathway; UMP from uridine: step 1/1. In terms of biological role, phosphorylates uridine and cytidine to uridine monophosphate and cytidine monophosphate. Does not phosphorylate deoxyribonucleosides or purine ribonucleosides. Can use ATP or GTP as a phosphate donor. Can also phosphorylate cytidine and uridine nucleoside analogs such as 6-azauridine, 5-fluorouridine, 4-thiouridine, 5-bromouridine, N(4)-acetylcytidine, N(4)-benzoylcytidine, 5-fluorocytidine, 2-thiocytidine, 5-methylcytidine, and N(4)-anisoylcytidine. In Homo sapiens (Human), this protein is Uridine-cytidine kinase 2 (UCK2).